The primary structure comprises 181 residues: Peptidyl-tRNA hydrolase (181 aa).

TRNA is bound at residue Tyr14. The active-site Proton acceptor is the His19. TRNA contacts are provided by Tyr62, Asn64, and Asn108.

It belongs to the PTH family. As to quaternary structure, monomer.

The protein localises to the cytoplasm. It carries out the reaction an N-acyl-L-alpha-aminoacyl-tRNA + H2O = an N-acyl-L-amino acid + a tRNA + H(+). Hydrolyzes ribosome-free peptidyl-tRNAs (with 1 or more amino acids incorporated), which drop off the ribosome during protein synthesis, or as a result of ribosome stalling. In terms of biological role, catalyzes the release of premature peptidyl moieties from peptidyl-tRNA molecules trapped in stalled 50S ribosomal subunits, and thus maintains levels of free tRNAs and 50S ribosomes. In Campylobacter jejuni subsp. jejuni serotype O:2 (strain ATCC 700819 / NCTC 11168), this protein is Peptidyl-tRNA hydrolase.